A 1638-amino-acid polypeptide reads, in one-letter code: MAQAGRSGDAFASLDQRRERQEEQAQSGLDKVFYFQGVVELFNRMKIAYGRTPAWTALMKCNAIYLKDFKTAVGVEGTRYGLFFAEEVTKPTWSPDIGANLITLGEKACLDAQNAKYERLQASLKTTSGLVHQVMEKTREAKENLEKANKIQEQLDKVIESNKALHRKIQERNREKMQEYMVRLHNTQKDRDDWVQRCSRLEQENVTLQKRLKEKENALVSVGWDLLGWIVISVLVFGLISLADAQNLTPPAKIVITPGQAEFMDLAKLEKIQVRKYRLDSCELPPEKGCVLYKDYLTTRPVSFLELMAKCSKPDWVSESSYNETTLMEECIQIFGAEWCEGKLVDLVPRKCGEQHVLVNIIEQIEKTREVVTLIYGKVMSYRLDMWITSIFSLVLAGNKEKLFKMAPFIFVAWFLNIPVFLTCVAVNIFPVVSLPFILFQIFMPQFVLVNAFLLWLTLTLTAFYWSEGPKILMEISYALVYTIGFVLWSLGLAVGVTLKLTMVHQILMFCVVAAAICGTKFACTTITVQHPDGTTAKYTRVGKLKNNVVNQCKKVVTTLQTRGVIPATPAKTASIVIVEGKNGTGVGFRFMNYILTAEHVVQGSDIATLKNGSVSVKSKVIKTIPIFESVDNVAVLKLPPELNSVKPIKLAKKVQSDYLTLTAYDPNFQHAATFTGWCIIDGNWLNNSFDTKFGNSGAPYCDHDGRLVGIHLGTQGVLSQGIVIVDALKNTFQLADQCRPQNFDMDEFLEKVIAGTKVSHAAILKELEELREEVQFLKKKCVTYDDYWLCQTIFGQAKGKTKKTVRGRKHLVTKRALGKGHFMKMRMLTDEEYQNMIEKGFSAEEIREAVNALREQAWLNYCIDNDVDDEGEEDWYDDMVETDRVNQEIDEAIERAMEDRGEFYQKKSRLTFVEQAMMHLIQVSKERSQTAKLEVQKENEAQLVKMFERCVTDENTPEGTTSIAALSTEDDVRLVEGKVIDFTKAKNIPVDGEIRREIIPGTKCTEISTGPENKKNILKKKDTHIAEGKVETKSSQQPVDVKDDKPVALEQRKPRACKWCGSSQKHDYRECRFQREKRFCVYCAAMHSMFEGHIRPIECTSCKKSFSGIEKLEDHVVSGECQKKLIEGPVTTKAPTPVPDWLKIFAWEDDILPPEGKTALPENVTLIGHIPVDKLVSRTKKVQDPLLGLVTPWKQDMYDSTTWTVKAYTKMFEKFHYHDPVDFVEQYAEFVLLCDNMVLREHDYMANSNITPIMSTEKNVNSTPAYPKFQAYDSEAEYLEDCGWQEYLDVVSDPETINRRPLWWCFLKNEVLKREKIEDSDIRMILCTDPIFTRIGAMFEQDQNNRMKQQTEIRSAQVGWTPFFGGLDRRVRRLYGDGDRYFVEMDWTRYDGTIPKSLFWRIRQIRFFFLHDSHKTPKMRRLYNWYVKNLLEKIILLPTGEVCQVKKGNPSGQFSTTVDNNMINVWLTTFEVSYLFFKQRGRLPTEKELQENCSMICYGDDRLLSIRKGFVEYEPDTVIDMYKNIFGMWVKRNNIKIQDTPEGLSFCGLTIVKSSTGAYVGVPNVNKILSTLENPVRRLPDVESLWGKLVSLRILCENAPSNVKHFLDEQISNVEEFAARENIQLPEVGPDFYSRIW.

Residues 130-222 (LVHQVMEKTR…KEKENALVSV (93 aa)) are a coiled coil. Helical transmembrane passes span 220–240 (VSVGWDLLGWIVISVLVFGLI), 379–398 (VMSYRLDMWITSIFSLVLAG), 407–427 (APFIFVAWFLNIPVFLTCVAV), 437–457 (FILFQIFMPQFVLVNAFLLWL), 479–499 (ALVYTIGFVLWSLGLAVGVTL), and 507–527 (ILMFCVVAAAICGTKFACTTI). Residues H600, D632, and S697 each act as charge relay system; for serine protease activity in the active site. A coiled-coil region spans residues 758 to 788 (KVSHAAILKELEELREEVQFLKKKCVTYDDY). Y834 is subject to O-(5'-phospho-RNA)-tyrosine. Positions 1381 to 1515 (RYFVEMDWTR…SIRKGFVEYE (135 aa)) constitute a RdRp catalytic domain.

The protein belongs to the astroviridae polyprotein 1AB family. As to quaternary structure, monomer. Cleaved by the viral and host proteases. The protease is probably autocatalytically cleaved.

It localises to the host membrane. The enzyme catalyses RNA(n) + a ribonucleoside 5'-triphosphate = RNA(n+1) + diphosphate. Functionally, responsible for the cleavage of the polyprotein into functional products. Protein covalently attached to the 5' extremity of the genomic and subgenomic RNAs. It may serve as a primer for the replicase. The chain is Non-structural polyprotein 1AB (ORF1) from Turkey astrovirus 2 (TAstV-2).